The primary structure comprises 337 residues: Glyceraldehyde-3-phosphate dehydrogenase (337 aa).

Residues 12-13 (RI), Asp34, and Lys79 each bind NAD(+). Residues 150 to 152 (SCT), Thr181, 210 to 211 (TG), and Arg233 contribute to the D-glyceraldehyde 3-phosphate site. The Nucleophile role is filled by Cys151. An NAD(+)-binding site is contributed by Asn315.

Belongs to the glyceraldehyde-3-phosphate dehydrogenase family. Homotetramer.

The protein localises to the cytoplasm. The enzyme catalyses D-glyceraldehyde 3-phosphate + phosphate + NAD(+) = (2R)-3-phospho-glyceroyl phosphate + NADH + H(+). Its pathway is carbohydrate degradation; glycolysis; pyruvate from D-glyceraldehyde 3-phosphate: step 1/5. The chain is Glyceraldehyde-3-phosphate dehydrogenase (GPD) from Cochliobolus lunatus (Filamentous fungus).